The primary structure comprises 345 residues: Short-wave-sensitive opsin 1 (345 aa).

At 1–30 (MSEEEFYLFKNISSVGPWDGPQYHIAPVWA) the chain is on the extracellular side. The N-linked (GlcNAc...) asparagine glycan is linked to Asn-11. A helical transmembrane segment spans residues 31–55 (FYLQAAFMGTVFLIGFPLNAMVLVA). Over 56 to 67 (TLRYKKLRQPLN) the chain is Cytoplasmic. The helical transmembrane segment at 68-93 (YILVNVSFGGFLLCIFSVFPVFVASC) threads the bilayer. Residues 94–107 (NGYFVFGRHVCALE) lie on the Extracellular side of the membrane. A disulfide bridge connects residues Cys-104 and Cys-181. A helical transmembrane segment spans residues 108 to 127 (GFLGTVAGLVTGWSLAFLAF). Topologically, residues 128–146 (ERYIVICKPFGNFRFSSKH) are cytoplasmic. A helical transmembrane segment spans residues 147-170 (ALTVVLATWTIGIGVSIPPFFGWS). Residues 171–196 (RFIPEGLQCSCGPDWYTVGTKYRSES) are Extracellular-facing. A helical membrane pass occupies residues 197 to 224 (YTWFLFIFCFIVPLSLICFSYTQLLRAL). Residues 225 to 246 (KAVAAQQQESATTQKAEREVSR) are Cytoplasmic-facing. The chain crosses the membrane as a helical span at residues 247–270 (MVVVMVGSFCVCYVPYAAFAMYMV). Topologically, residues 271-278 (NNRNHGLD) are extracellular. Residues 279-303 (LRLVTIPSFFSKSACIYNPIIYCFM) form a helical membrane-spanning segment. N6-(retinylidene)lysine is present on Lys-290. Residues 304–345 (NKQFQACIMKMVCGKAMTDESDTCSSQKTEVSTVSSTQVGPN) are Cytoplasmic-facing.

This sequence belongs to the G-protein coupled receptor 1 family. Opsin subfamily. Post-translationally, phosphorylated on some or all of the serine and threonine residues present in the C-terminal region. As to expression, the three color pigments are found in the cone photoreceptor cells. Expressed throughout the epidermis and dermis, primarily in the stratum granulosum in the facial and abdominal skin (at protein level). Expressed in dermal fibroblasts (at protein level). Expressed in melanocytes (at protein level).

The protein resides in the cell membrane. Its subcellular location is the photoreceptor inner segment. The protein localises to the cell projection. It is found in the cilium. It localises to the photoreceptor outer segment. The protein resides in the cytoplasm. Its subcellular location is the perinuclear region. Functionally, visual pigments are the light-absorbing molecules that mediate vision. They consist of an apoprotein, opsin, covalently linked to cis-retinal. Required for the maintenance of cone outer segment organization in the ventral retina, but not essential for the maintenance of functioning cone photoreceptors. Involved in ensuring correct abundance and localization of retinal membrane proteins. May increase spectral sensitivity in dim light. The sequence is that of Short-wave-sensitive opsin 1 (OPN1SW) from Homo sapiens (Human).